Reading from the N-terminus, the 159-residue chain is uncharacterized protein (159 aa).

The protein belongs to the IIV-6 136R family.

This is an uncharacterized protein from Invertebrate iridescent virus 3 (IIV-3).